A 445-amino-acid chain; its full sequence is MDIRQVRETVEMIEEQHFDIRTITMGISLLDCIDSDIDRAAAKIYQKITTKAANLVAVGDDIAAELGIPIVNKRVSVTPIALIGAATDAEDYLSLAKALDQAACDIGVDFIGGFSALVQKGYQKGDKILIESIPQALAQTQKVCASVNVGSTRSGINMTAVADMGRIIKETAKASEIGAAKLVVFANAVEDNPFMAGAFHGVGEADTVINVGVSGPGVVKRALEKVRGESFDVLAETVKKTAFKITRIGQLVGQMASERLGVGFGVVDLSLAPTPAVGDSVARVLEEMGLEIVGTHGTTAALALLNDAVKKGGVMACNRVGGLSGAFIPVSEDEGMIAAVQGGSLNLEKLEAMTAICSVGLDMIAIPEETPSETIAAMIADEAAIGVINQKTTAVRIIPKGKEGDMIAFGGLLGTAPVMAVNPHSSADFIARGGQIPAPIHSFKN.

This sequence belongs to the UPF0210 family. In terms of assembly, homodimer.

In Streptococcus equi subsp. equi (strain 4047), this protein is UPF0210 protein SEQ_0468.